A 412-amino-acid chain; its full sequence is Multifunctional CCA protein (412 aa).

ATP contacts are provided by Gly8 and Arg11. Residues Gly8 and Arg11 each contribute to the CTP site. Mg(2+) is bound by residues Asp21 and Asp23. ATP contacts are provided by Arg91, Arg137, and Arg140. CTP contacts are provided by Arg91, Arg137, and Arg140. Residues 226–327 form the HD domain; sequence TGIHTMMVID…VTLFEKTDAL (102 aa).

The protein belongs to the tRNA nucleotidyltransferase/poly(A) polymerase family. Bacterial CCA-adding enzyme type 1 subfamily. As to quaternary structure, monomer. Can also form homodimers and oligomers. Mg(2+) serves as cofactor. The cofactor is Ni(2+).

The enzyme catalyses a tRNA precursor + 2 CTP + ATP = a tRNA with a 3' CCA end + 3 diphosphate. The catalysed reaction is a tRNA with a 3' CCA end + 2 CTP + ATP = a tRNA with a 3' CCACCA end + 3 diphosphate. Functionally, catalyzes the addition and repair of the essential 3'-terminal CCA sequence in tRNAs without using a nucleic acid template. Adds these three nucleotides in the order of C, C, and A to the tRNA nucleotide-73, using CTP and ATP as substrates and producing inorganic pyrophosphate. tRNA 3'-terminal CCA addition is required both for tRNA processing and repair. Also involved in tRNA surveillance by mediating tandem CCA addition to generate a CCACCA at the 3' terminus of unstable tRNAs. While stable tRNAs receive only 3'-terminal CCA, unstable tRNAs are marked with CCACCA and rapidly degraded. In Dechloromonas aromatica (strain RCB), this protein is Multifunctional CCA protein.